The chain runs to 354 residues: Major egg antigen (354 aa).

Positions Met1–Phe21 are disordered. 2 consecutive sHSP domains span residues Ser122–Arg233 and Ala251–His354.

This sequence belongs to the small heat shock protein (HSP20) family.

The chain is Major egg antigen from Schistosoma mansoni (Blood fluke).